The chain runs to 523 residues: Apoptosis inhibitor 5-B (523 aa).

An ARM-like and Heat-like helical repeats region spans residues 1-360 (MPTVEELYRN…HQLGRKLPDF (360 aa)). The disordered stretch occupies residues 446–523 (VQKTDSGQKR…RGNRSRGRIY (78 aa)). The short motif at 454-475 (KRMSDETSSTSPPKKPVVGPKR) is the Nuclear localization signal element. Residues 502–515 (GFQGGRGRGWGGRG) show a composition bias toward gly residues.

The protein belongs to the API5 family. As to quaternary structure, monomer.

The protein localises to the nucleus. May be an antiapoptotic factor. This chain is Apoptosis inhibitor 5-B (api5-b), found in Xenopus laevis (African clawed frog).